The primary structure comprises 89 residues: Small ribosomal subunit protein uS15 (89 aa).

This sequence belongs to the universal ribosomal protein uS15 family. Part of the 30S ribosomal subunit. Forms a bridge to the 50S subunit in the 70S ribosome, contacting the 23S rRNA.

Its function is as follows. One of the primary rRNA binding proteins, it binds directly to 16S rRNA where it helps nucleate assembly of the platform of the 30S subunit by binding and bridging several RNA helices of the 16S rRNA. Functionally, forms an intersubunit bridge (bridge B4) with the 23S rRNA of the 50S subunit in the ribosome. The polypeptide is Small ribosomal subunit protein uS15 (Rhizobium meliloti (strain 1021) (Ensifer meliloti)).